The primary structure comprises 361 residues: DNA replication and repair protein RecF (361 aa).

30-37 serves as a coordination point for ATP; that stretch reads GPNGSGKT.

Belongs to the RecF family.

It localises to the cytoplasm. Functionally, the RecF protein is involved in DNA metabolism; it is required for DNA replication and normal SOS inducibility. RecF binds preferentially to single-stranded, linear DNA. It also seems to bind ATP. This is DNA replication and repair protein RecF from Erwinia tasmaniensis (strain DSM 17950 / CFBP 7177 / CIP 109463 / NCPPB 4357 / Et1/99).